The following is a 540-amino-acid chain: Sesquiterpene synthase 15b (540 aa).

Positions 292, 296, and 445 each coordinate Mg(2+). The DDXXD motif signature appears at 292 to 296; the sequence is DDIYD.

The protein belongs to the terpene synthase family. Tpsa subfamily. Requires Mg(2+) as cofactor. The cofactor is Mn(2+).

It carries out the reaction (2E,6E)-farnesyl diphosphate = germacrene A + diphosphate. It functions in the pathway secondary metabolite biosynthesis; terpenoid biosynthesis. Sesquiterpene synthase involved in the biosynthesis of volatile compounds. Mediates the conversion of (2E,6E)-farnesyl diphosphate (FPP) into germacrene A. The chain is Sesquiterpene synthase 15b from Solanum habrochaites (Wild tomato).